The following is a 273-amino-acid chain: Hydroxyethylthiazole kinase (273 aa).

Substrate is bound at residue Met-49. Residues Arg-125 and Thr-171 each contribute to the ATP site. Substrate is bound at residue Gly-198.

Belongs to the Thz kinase family. Requires Mg(2+) as cofactor.

It carries out the reaction 5-(2-hydroxyethyl)-4-methylthiazole + ATP = 4-methyl-5-(2-phosphooxyethyl)-thiazole + ADP + H(+). Its pathway is cofactor biosynthesis; thiamine diphosphate biosynthesis; 4-methyl-5-(2-phosphoethyl)-thiazole from 5-(2-hydroxyethyl)-4-methylthiazole: step 1/1. In terms of biological role, catalyzes the phosphorylation of the hydroxyl group of 4-methyl-5-beta-hydroxyethylthiazole (THZ). The chain is Hydroxyethylthiazole kinase from Desulforudis audaxviator (strain MP104C).